Here is a 290-residue protein sequence, read N- to C-terminus: Phosphatidylglycerol--prolipoprotein diacylglyceryl transferase (290 aa).

Transmembrane regions (helical) follow at residues 21-41, 60-80, 96-116, 124-144, 199-219, 226-246, and 259-279; these read VSLH…MWLA, LLYA…VLFY, WDGG…MLWF, FFQV…AGRL, SQLY…NLFI, GSVS…VECF, and VISM…IMMI. Residue R143 coordinates a 1,2-diacyl-sn-glycero-3-phospho-(1'-sn-glycerol).

The protein belongs to the Lgt family.

The protein resides in the cell inner membrane. The catalysed reaction is L-cysteinyl-[prolipoprotein] + a 1,2-diacyl-sn-glycero-3-phospho-(1'-sn-glycerol) = an S-1,2-diacyl-sn-glyceryl-L-cysteinyl-[prolipoprotein] + sn-glycerol 1-phosphate + H(+). It functions in the pathway protein modification; lipoprotein biosynthesis (diacylglyceryl transfer). In terms of biological role, catalyzes the transfer of the diacylglyceryl group from phosphatidylglycerol to the sulfhydryl group of the N-terminal cysteine of a prolipoprotein, the first step in the formation of mature lipoproteins. This Yersinia enterocolitica serotype O:8 / biotype 1B (strain NCTC 13174 / 8081) protein is Phosphatidylglycerol--prolipoprotein diacylglyceryl transferase.